Consider the following 695-residue polypeptide: Hypersensitivity response secretion protein HrpI (695 aa).

The next 7 helical transmembrane spans lie at 21-38, 45-61, 68-92, 111-135, 203-223, 244-262, and 311-327; these read LVGA…ITPL, VLIA…IMLA, LAFS…VSTT, FVVG…FLVI, AIAS…IGVL, GLIA…GMII, and VFIT…LLQL.

The protein belongs to the FHIPEP (flagella/HR/invasion proteins export pore) family.

The protein localises to the cell inner membrane. Its function is as follows. Involved in the secretion of harpin-pss; a proteinaceous elicitor of the hypersensitivity response in plants. This is Hypersensitivity response secretion protein HrpI (hrpI) from Pseudomonas syringae pv. syringae.